Here is a 1529-residue protein sequence, read N- to C-terminus: ABC multidrug transporter AFR2 (1529 aa).

Residues 144 to 394 (GSLRDLIGNR…FVDMGFHCPS (251 aa)) enclose the ABC transporter 1 domain. 2 N-linked (GlcNAc...) asparagine glycosylation sites follow: Asn235 and Asn318. Helical transmembrane passes span 510-530 (LFGN…LPVT), 539-559 (ALLF…ILIL), 589-609 (IPYK…MTNL), 614-634 (GAYF…SMLF), and 648-668 (LAPA…AVNV). N-linked (GlcNAc...) asparagine glycosylation is present at Asn742. Residues 757–777 (GILIGFFLFFTAIYLTATEFI) traverse the membrane as a helical segment. Residues 845-1087 (FSWKDVVYDI…ILIDYFEKNG (243 aa)) form the ABC transporter 2 domain. 881-888 (GVSGAGKT) is a binding site for ATP. The next 5 helical transmembrane spans lie at 1193–1213 (YIWA…FSFF), 1229–1249 (VFMM…NFVT), 1268–1288 (IFIL…GVII), 1314–1334 (LMFL…IMIV), and 1353–1373 (MCLI…FWVF). N-linked (GlcNAc...) asparagine glycosylation occurs at Asn1434. Residues 1465–1485 (FGLLWVYVVFNVIAAIGIYWL) traverse the membrane as a helical segment. The span at 1493–1505 (GKERASEPEDVQE) shows a compositional bias: basic and acidic residues. Residues 1493–1529 (GKERASEPEDVQEKQVPAQSTEKKYQSISRSSESTVA) form a disordered region. Polar residues predominate over residues 1518 to 1529 (QSISRSSESTVA).

The protein belongs to the ABC transporter superfamily. ABCG family. PDR (TC 3.A.1.205) subfamily.

It is found in the cell membrane. It catalyses the reaction itraconazole(in) + ATP + H2O = itraconazole(out) + ADP + phosphate + H(+). It carries out the reaction voriconazole(in) + ATP + H2O = voriconazole(out) + ADP + phosphate + H(+). The catalysed reaction is fluconazole(in) + ATP + H2O = fluconazole(out) + ADP + phosphate + H(+). Functionally, pleiotropic ABC efflux transporter that confers resistance to structurally and functionally unrelated compounds including azoles such as fluconazole (FLC), itraconazole (ITC), posaconazole (POS), and voriconazole (VRC). The protein is ABC multidrug transporter AFR2 of Cryptococcus deuterogattii (strain R265) (Cryptococcus gattii VGII (strain R265)).